The chain runs to 217 residues: Glutathione S-transferase U20 (217 aa).

The GST N-terminal domain maps to 3–82; the sequence is NLPILLDYWP…YVDEAWPEKN (80 aa). Residues Ser-13, Ile-54, and Ser-67 each coordinate glutathione. In terms of domain architecture, GST C-terminal spans 88 to 208; it reads DPYGRAQARF…LPDSEKIVAY (121 aa).

It belongs to the GST superfamily. Tau family. In terms of assembly, homodimerization. Interacts with JAR1/FIN219 under continuous far red (cFR) light to stimulate JAR1/FIN219 activity and substrate selectivity. Mostly associated with vascular tissues, especially near hydathodes.

It is found in the nucleus. It localises to the cytoplasm. The protein resides in the cytosol. It carries out the reaction RX + glutathione = an S-substituted glutathione + a halide anion + H(+). With respect to regulation, activated by JAR1/FIN219. Functionally, exhibits glutathione-dependent thiol transferase activities. Can use glutathione (GSH) and 1-chloro-2,4-dinitrobenzene (CDNB) as substrates. Involved in the regulation of far-red light influence on development. Regulator of the interplay between light and JA signaling by increasing JAR1/FIN219 efficiency. Maybe involved in gravitropic signal transduction. The chain is Glutathione S-transferase U20 from Arabidopsis thaliana (Mouse-ear cress).